The chain runs to 312 residues: 6-hydroxy-3-succinoylpyridine 3-monooxygenase HspA (312 aa).

Positions 14-210 constitute an NYN domain; sequence IYIDGYNFYY…RSANTDLIKF (197 aa).

The catalysed reaction is 4-(6-hydroxypyridin-3-yl)-4-oxobutanoate + 2 NADH + O2 + 2 H(+) = 2,5-dihydroxypyridine + succinate semialdehyde + 2 NAD(+) + H2O. Its pathway is alkaloid degradation; nicotine degradation. In terms of biological role, involved in the nicotine degradation. Catalyzes the cleavage of 6-hydroxy-3-succinoylpyridine (HSP) by incorporation of oxygen at the 3-position to produce to 2,5-dihydroxypyridine (DHP) and succinic semialdehyde. The polypeptide is 6-hydroxy-3-succinoylpyridine 3-monooxygenase HspA (Pseudomonas putida (strain DSM 28022 / S16)).